The following is a 329-amino-acid chain: 4-hydroxythreonine-4-phosphate dehydrogenase (329 aa).

The substrate site is built by H137 and T138. Residues H167, H212, and H267 each contribute to the a divalent metal cation site. Substrate-binding residues include K275, N284, and R293.

It belongs to the PdxA family. Homodimer. Zn(2+) serves as cofactor. It depends on Mg(2+) as a cofactor. The cofactor is Co(2+).

The protein resides in the cytoplasm. The catalysed reaction is 4-(phosphooxy)-L-threonine + NAD(+) = 3-amino-2-oxopropyl phosphate + CO2 + NADH. It participates in cofactor biosynthesis; pyridoxine 5'-phosphate biosynthesis; pyridoxine 5'-phosphate from D-erythrose 4-phosphate: step 4/5. Catalyzes the NAD(P)-dependent oxidation of 4-(phosphooxy)-L-threonine (HTP) into 2-amino-3-oxo-4-(phosphooxy)butyric acid which spontaneously decarboxylates to form 3-amino-2-oxopropyl phosphate (AHAP). In Stutzerimonas stutzeri (strain A1501) (Pseudomonas stutzeri), this protein is 4-hydroxythreonine-4-phosphate dehydrogenase.